The sequence spans 117 residues: Large ribosomal subunit protein uL23 (117 aa).

The protein belongs to the universal ribosomal protein uL23 family. Part of the 50S ribosomal subunit. Contacts protein L29, and trigger factor when it is bound to the ribosome.

Functionally, one of the early assembly proteins it binds 23S rRNA. One of the proteins that surrounds the polypeptide exit tunnel on the outside of the ribosome. Forms the main docking site for trigger factor binding to the ribosome. The chain is Large ribosomal subunit protein uL23 from Acetivibrio thermocellus (strain ATCC 27405 / DSM 1237 / JCM 9322 / NBRC 103400 / NCIMB 10682 / NRRL B-4536 / VPI 7372) (Clostridium thermocellum).